Here is a 106-residue protein sequence, read N- to C-terminus: Nucleoid-associated protein BRADO0764 (106 aa).

The protein belongs to the YbaB/EbfC family. In terms of assembly, homodimer.

It localises to the cytoplasm. It is found in the nucleoid. In terms of biological role, binds to DNA and alters its conformation. May be involved in regulation of gene expression, nucleoid organization and DNA protection. This chain is Nucleoid-associated protein BRADO0764, found in Bradyrhizobium sp. (strain ORS 278).